The primary structure comprises 564 residues: MVLYIILAIIVIILIAVGVLFYLRSNKRQIIEKAIERKNEIETLPFDQNLAQLFKLNLKGETKTKYDAMKKDTVESTNKYLAPVEEKIHNAEALLDKFSFNASQSEIDDANELMDSYEQSYQQQLEDVNEIIALYKDNDELYDKCKVDYREMKRDVLANRHQFGEAASLLETEIEKFEPRLEQYEVLKADGNYVQAHNHIAALNEQMKQLRSYMEEIPELIRETQKELPGQFQDLKYGCRDLKVEGYDLDHVKVDSTLQSLKTELSFVEPLISRLELEEANDKLANINDKLDDMYDLIEHEVKAKNDVEETKDIITDNLFKAKDMNYTLQTEIEYVRENYYINESDAQSVRQFENEIQSLISVYDDILKEMSKSAVRYSEVQDNLQYLEDHVTVINDKQEKLQNHLIQLREDEAEAEDNLLRVQSKKEEVYRRLLASNLTSVPERFIIMKNEIDHEVRDVNEQFSERPIHVKQLKDKVSKIVIQMNTFEDEANDVLVNAVYAEKLIQYGNRYRKDYSNVDKSLNEAERLFKNNRYKRAIEIAEQALESVEPGVTKHIEEEVIKQ.

Over 1 to 4 (MVLY) the chain is Extracellular. Residues 5-23 (IILAIIVIILIAVGVLFYL) traverse the membrane as a helical segment. Topologically, residues 24–564 (RSNKRQIIEK…KHIEEEVIKQ (541 aa)) are cytoplasmic. Coiled coils occupy residues 99–138 (SFNA…YKDN), 190–223 (DGNY…LIRE), 271–300 (LISR…LIEH), 350–435 (VRQF…RRLL), and 471–550 (VKQL…ESVE).

Belongs to the EzrA family.

The protein localises to the cell membrane. In terms of biological role, negative regulator of FtsZ ring formation; modulates the frequency and position of FtsZ ring formation. Inhibits FtsZ ring formation at polar sites. Interacts either with FtsZ or with one of its binding partners to promote depolymerization. This chain is Septation ring formation regulator EzrA, found in Staphylococcus aureus (strain NCTC 8325 / PS 47).